The sequence spans 186 residues: Probable chorismate pyruvate-lyase (186 aa).

Residues Arg-77, Leu-115, and Glu-174 each contribute to the substrate site.

This sequence belongs to the UbiC family.

It localises to the cytoplasm. It catalyses the reaction chorismate = 4-hydroxybenzoate + pyruvate. It functions in the pathway cofactor biosynthesis; ubiquinone biosynthesis. Removes the pyruvyl group from chorismate, with concomitant aromatization of the ring, to provide 4-hydroxybenzoate (4HB) for the ubiquinone pathway. The polypeptide is Probable chorismate pyruvate-lyase (Shewanella sp. (strain W3-18-1)).